We begin with the raw amino-acid sequence, 191 residues long: MKAVVSKLYCSSMEEVMVVRRRPHVVNGGGFVVTDYKEKIVFKIDGCGVLGTKGELVLRDSDGNDLLLIHKKGGVVQALSIHNKWKGYSYDYQGSPKPVFTLRDPKHSCFSITSSIRISVGPGNCYFDVKGYFPDRDCSIVDSKGNVIAQVKEWIGSRDIYKVVTKPSVDKAFVFGVIAVLDYIYGESTSC.

Belongs to the LOR family.

Might be related to the phospholipid scramblase and tubby-like superfamily of membrane tethered transcription factors. The chain is Protein LURP-one-related 6 from Arabidopsis thaliana (Mouse-ear cress).